Here is a 1438-residue protein sequence, read N- to C-terminus: DNA polymerase III PolC-type (1438 aa).

Residues 422–578 (YVVFDVETTG…YDTEATAYIF (157 aa)) enclose the Exonuclease domain.

The protein belongs to the DNA polymerase type-C family. PolC subfamily.

The protein resides in the cytoplasm. It catalyses the reaction DNA(n) + a 2'-deoxyribonucleoside 5'-triphosphate = DNA(n+1) + diphosphate. Required for replicative DNA synthesis. This DNA polymerase also exhibits 3' to 5' exonuclease activity. In Staphylococcus epidermidis (strain ATCC 35984 / DSM 28319 / BCRC 17069 / CCUG 31568 / BM 3577 / RP62A), this protein is DNA polymerase III PolC-type.